Reading from the N-terminus, the 320-residue chain is Methionyl-tRNA formyltransferase (320 aa).

Ser-111 to Pro-114 provides a ligand contact to (6S)-5,6,7,8-tetrahydrofolate.

The protein belongs to the Fmt family.

The catalysed reaction is L-methionyl-tRNA(fMet) + (6R)-10-formyltetrahydrofolate = N-formyl-L-methionyl-tRNA(fMet) + (6S)-5,6,7,8-tetrahydrofolate + H(+). Functionally, attaches a formyl group to the free amino group of methionyl-tRNA(fMet). The formyl group appears to play a dual role in the initiator identity of N-formylmethionyl-tRNA by promoting its recognition by IF2 and preventing the misappropriation of this tRNA by the elongation apparatus. The sequence is that of Methionyl-tRNA formyltransferase from Bifidobacterium adolescentis (strain ATCC 15703 / DSM 20083 / NCTC 11814 / E194a).